A 264-amino-acid chain; its full sequence is MKPTTIASLQKCKQEKKRFATITAYDYSFAKLFAEEGLNVMLVGDSLGMTVQGHESTLPVTVEDIAYHTTAVRRGAPNCLLLADLPFMAYATPEQAFENAATVMRAGANMVKIEGGEWLVETVKMLTERAVPVCGHLGLTPQSVNIFGGYKVQGRGDEASDRLLSDALALEAAGAQLLVLECVPVELAKRITEALAIPVIGIGAGNVTDGQILVMHDAFGITGGHIPKFAKNFLAETGDIRAAVRQYMAEVESGVYPGEEHSFH.

Residues Asp-45 and Asp-84 each coordinate Mg(2+). 3-methyl-2-oxobutanoate contacts are provided by residues 45–46 (DS), Asp-84, and Lys-112. Glu-114 provides a ligand contact to Mg(2+). The Proton acceptor role is filled by Glu-181.

This sequence belongs to the PanB family. Homodecamer; pentamer of dimers. Requires Mg(2+) as cofactor.

It localises to the cytoplasm. It catalyses the reaction 3-methyl-2-oxobutanoate + (6R)-5,10-methylene-5,6,7,8-tetrahydrofolate + H2O = 2-dehydropantoate + (6S)-5,6,7,8-tetrahydrofolate. It participates in cofactor biosynthesis; (R)-pantothenate biosynthesis; (R)-pantoate from 3-methyl-2-oxobutanoate: step 1/2. In terms of biological role, catalyzes the reversible reaction in which hydroxymethyl group from 5,10-methylenetetrahydrofolate is transferred onto alpha-ketoisovalerate to form ketopantoate. The sequence is that of 3-methyl-2-oxobutanoate hydroxymethyltransferase from Escherichia coli O157:H7.